A 227-amino-acid chain; its full sequence is UPF0758 protein lpg2489 (227 aa).

In terms of domain architecture, MPN spans 102 to 225; the sequence is RLSNTQQTYA…YSIFAENKWV (124 aa). Zn(2+) contacts are provided by histidine 173, histidine 175, and aspartate 186. A JAMM motif motif is present at residues 173-186; it reads HNHPSGLSDASQQD.

The protein belongs to the UPF0758 family.

In Legionella pneumophila subsp. pneumophila (strain Philadelphia 1 / ATCC 33152 / DSM 7513), this protein is UPF0758 protein lpg2489.